We begin with the raw amino-acid sequence, 160 residues long: 6-hydroxypseudooxynicotine dehydrogenase complex subunit beta (160 aa).

One can recognise a 2Fe-2S ferredoxin-type domain in the interval 4 to 80 (FRLTVEVNGV…NSRIETVESL (77 aa)). [2Fe-2S] cluster contacts are provided by cysteine 42, cysteine 47, cysteine 50, cysteine 62, cysteine 101, cysteine 104, cysteine 137, and cysteine 139.

Heterohexamer of 2 alpha (kdhA), 2 beta (kdhB) and 2 gamma (kdhC) subunit. Dimer of heterotrimers. [2Fe-2S] cluster serves as cofactor.

It carries out the reaction 6-hydroxypseudooxynicotine + A + H2O = 2,6-dihydroxypseudooxynicotine + AH2. Its pathway is alkaloid degradation; nicotine degradation. Molybdo-flavoprotein enzyme complex involved in nicotine degradation. The subunit gamma (large subunit) contains the substrate-binding sites, the subunit alpha (medium subunit) binds FAD and the subunit beta (small subunit) has a 2Fe-2S ferredoxin-type domain which binds 2 2Fe-2S clusters. This Paenarthrobacter nicotinovorans (Arthrobacter nicotinovorans) protein is 6-hydroxypseudooxynicotine dehydrogenase complex subunit beta (kdhB).